The following is a 318-amino-acid chain: NADH-ubiquinone oxidoreductase chain 1 (318 aa).

Transmembrane regions (helical) follow at residues 3–23, 70–90, 100–120, 146–166, 171–191, 231–251, 254–273, and 294–314; these read FINI…LTLV, LFII…IPLP, LGML…LWSG, MAII…QMLI, HIWL…STLA, IILM…HINY, LYST…FLWI, and LPLT…LAGI.

It belongs to the complex I subunit 1 family. As to quaternary structure, core subunit of respiratory chain NADH dehydrogenase (Complex I) which is composed of 45 different subunits.

Its subcellular location is the mitochondrion inner membrane. The enzyme catalyses a ubiquinone + NADH + 5 H(+)(in) = a ubiquinol + NAD(+) + 4 H(+)(out). Its function is as follows. Core subunit of the mitochondrial membrane respiratory chain NADH dehydrogenase (Complex I) which catalyzes electron transfer from NADH through the respiratory chain, using ubiquinone as an electron acceptor. Essential for the catalytic activity and assembly of complex I. This Rattus norvegicus (Rat) protein is NADH-ubiquinone oxidoreductase chain 1.